Consider the following 449-residue polypeptide: FAD-linked oxidoreductase janO (449 aa).

The FAD-binding PCMH-type domain occupies 32–203; sequence PDAQPLAIIK…TRFHLNTRPL (172 aa).

This sequence belongs to the oxygen-dependent FAD-linked oxidoreductase family. The cofactor is FAD.

It participates in secondary metabolite biosynthesis. Its function is as follows. FAD-linked oxidoreductase; part of the gene cluster that mediates the biosynthesis of the indole diterpenes janthitremanes such as shearinine K or shearinine A. The geranylgeranyl diphosphate (GGPP) synthase janG catalyzes the first step in janthitremane biosynthesis via conversion of farnesyl pyrophosphate and isopentyl pyrophosphate into geranylgeranyl pyrophosphate (GGPP). Condensation of indole-3-glycerol phosphate with GGPP by the prenyl transferase janC then forms 3-geranylgeranylindole (3-GGI). Epoxidation by the FAD-dependent monooxygenase janM leads to a epoxidized-GGI that is substrate of the terpene cyclase janB for cyclization to yield paspaline. Paspaline is subsequently converted to 13-desoxypaspaline by the cytochrome P450 monooxygenase janP, via beta-PC-M6 in a series of alpha-face oxidations. The cytochrome P450 monooxygenase janQ is proposed to carry out sequential beta-face oxidation steps at C-7 and C-13 of 13-desoxypaspaline to form paspalicine and paspalinine respectively. The indole diterpene prenyltransferase janD may then convert paspalinine into shearinine K which is substrate of janO and/or additional enzymes for oxidation and cyclization to generate shearinine A. This chain is FAD-linked oxidoreductase janO, found in Penicillium janthinellum (Penicillium vitale).